A 422-amino-acid polypeptide reads, in one-letter code: Probable protein phosphatase 2C 69 (422 aa).

The 250-residue stretch at 45-294 folds into the PPM-type phosphatase domain; the sequence is TLLLAEAGER…DDTTCIVVDI (250 aa). Positions 70, 71, 246, and 285 each coordinate Mn(2+).

Belongs to the PP2C family. The cofactor is Mg(2+). It depends on Mn(2+) as a cofactor.

The catalysed reaction is O-phospho-L-seryl-[protein] + H2O = L-seryl-[protein] + phosphate. The enzyme catalyses O-phospho-L-threonyl-[protein] + H2O = L-threonyl-[protein] + phosphate. The sequence is that of Probable protein phosphatase 2C 69 from Oryza sativa subsp. japonica (Rice).